Consider the following 436-residue polypeptide: Cyclin-dependent kinase 11B (436 aa).

The Nuclear localization signal motif lies at V25–K30. The tract at residues K30–E44 is calmodulin-binding. Residues F79–F364 enclose the Protein kinase domain. ATP-binding positions include I85–V93 and K108. Phosphoserine; by CDK7 is present on S123. Position 129 is a phosphothreonine; by CDK7 (T129). Catalysis depends on D203, which acts as the Proton acceptor. A Phosphoserine modification is found at S230. Y235 is modified (phosphotyrosine). T236 is modified (phosphothreonine). Residue K282 forms a Glycyl lysine isopeptide (Lys-Gly) (interchain with G-Cter in SUMO2) linkage. Residues S383–L406 form a disordered region. At T392 the chain carries Phosphothreonine. S393 is modified (phosphoserine).

The protein belongs to the protein kinase superfamily. CMGC Ser/Thr protein kinase family. CDC2/CDKX subfamily. May interact PAK1 and RANBP9. p110C interacts with RNPS1. Interacts with CCND3. Interacts with CCNL1 and CCNL2. Forms complexes with pre-mRNA-splicing factors, including at least SRSF1, SRSF2 AND SRSF7/SLU7. Mg(2+) is required as a cofactor.

It localises to the cytoplasm. The protein localises to the nucleus membrane. It is found in the endomembrane system. Its subcellular location is the perinuclear region. The enzyme catalyses L-seryl-[protein] + ATP = O-phospho-L-seryl-[protein] + ADP + H(+). It carries out the reaction L-threonyl-[protein] + ATP = O-phospho-L-threonyl-[protein] + ADP + H(+). Its function is as follows. Plays multiple roles in cell cycle progression, cytokinesis and apoptosis. Involved in pre-mRNA splicing in a kinase activity-dependent manner. May act as a negative regulator of normal cell cycle progression. In Rattus norvegicus (Rat), this protein is Cyclin-dependent kinase 11B (Cdk11b).